Reading from the N-terminus, the 193-residue chain is Probable DNA-directed RNA polymerase subunit delta (193 aa).

The region spanning 14 to 83 (LSMIEVARAI…GENKWGLRSW (70 aa)) is the HTH HARE-type domain. Composition is skewed to acidic residues over residues 117–134 (GDDDAIDYGHDDPEDEDN) and 142–193 (EYDD…VVDE). The segment at 117-193 (GDDDAIDYGH…EYSDEEVVDE (77 aa)) is disordered.

This sequence belongs to the RpoE family. RNAP is composed of a core of 2 alpha, a beta and a beta' subunits. The core is associated with a delta subunit and one of several sigma factors.

Functionally, participates in both the initiation and recycling phases of transcription. In the presence of the delta subunit, RNAP displays an increased specificity of transcription, a decreased affinity for nucleic acids, and an increased efficiency of RNA synthesis because of enhanced recycling. This Streptococcus suis (strain 05ZYH33) protein is Probable DNA-directed RNA polymerase subunit delta.